The primary structure comprises 543 residues: Chaperonin GroEL (543 aa).

ATP contacts are provided by residues 30–33 (TLGP), Lys-51, 87–91 (DGTTT), Gly-415, 479–481 (NAA), and Asp-495.

The protein belongs to the chaperonin (HSP60) family. Forms a cylinder of 14 subunits composed of two heptameric rings stacked back-to-back. Interacts with the co-chaperonin GroES.

The protein localises to the cytoplasm. The enzyme catalyses ATP + H2O + a folded polypeptide = ADP + phosphate + an unfolded polypeptide.. In terms of biological role, together with its co-chaperonin GroES, plays an essential role in assisting protein folding. The GroEL-GroES system forms a nano-cage that allows encapsulation of the non-native substrate proteins and provides a physical environment optimized to promote and accelerate protein folding. The sequence is that of Chaperonin GroEL from Francisella philomiragia subsp. philomiragia (strain ATCC 25017 / CCUG 19701 / FSC 153 / O#319-036).